A 234-amino-acid polypeptide reads, in one-letter code: MSSSNYNINNGGDYYPLSSSNLNSTSAITNATVMEYSTMPSSSPGSMSSSPAYPAAYQAPSPCYVADPNQLYYQQQLAHNGNDMLVQAHAQAYQAQCFAWFQQQYSQLSPSSFPHPMVAHHAGFIPPPPSFLHHQHQQHPRAPSEKRRGARTPFSDSQLYALRTRFEQCDTIKVDERRKLGAVIGLSPEQIKIWFQNRRFKLRKEKYKQIKQDAVQQQKSAKEEAEEDQKHVIS.

Disordered regions lie at residues 128 to 154 (PPSF…RTPF) and 209 to 234 (QIKQ…HVIS). A DNA-binding region (homeobox) is located at residues 147–206 (RRGARTPFSDSQLYALRTRFEQCDTIKVDERRKLGAVIGLSPEQIKIWFQNRRFKLRKEK). Over residues 220-234 (SAKEEAEEDQKHVIS) the composition is skewed to basic and acidic residues.

This sequence belongs to the NK-2 homeobox family.

It localises to the nucleus. Functionally, required for mesoderm development, including specification of muscle and coelomocyte precursors. This is Homeobox protein ceh-51 from Caenorhabditis elegans.